The sequence spans 253 residues: Phosphate import ATP-binding protein PstB (253 aa).

Residues 8 to 248 (IQVRDLDLFY…PRDKRTEDYI (241 aa)) enclose the ABC transporter domain. Residue 40-47 (GPSGCGKS) participates in ATP binding.

The protein belongs to the ABC transporter superfamily. Phosphate importer (TC 3.A.1.7) family. The complex is composed of two ATP-binding proteins (PstB), two transmembrane proteins (PstC and PstA) and a solute-binding protein (PstS).

It localises to the cell membrane. The enzyme catalyses phosphate(out) + ATP + H2O = ADP + 2 phosphate(in) + H(+). Its function is as follows. Part of the ABC transporter complex PstSACB involved in phosphate import. Responsible for energy coupling to the transport system. The polypeptide is Phosphate import ATP-binding protein PstB (Clostridium perfringens (strain ATCC 13124 / DSM 756 / JCM 1290 / NCIMB 6125 / NCTC 8237 / Type A)).